The chain runs to 223 residues: Putative protein phosphatase 2C 63 (223 aa).

The segment at 1–22 (MASSQQAVRETGRGRASSSSAG) is disordered. In terms of domain architecture, PPM-type phosphatase spans 1 to 212 (MASSQQAVRE…RNFHVHSSHV (212 aa)).

The protein belongs to the PP2C family.

The catalysed reaction is O-phospho-L-seryl-[protein] + H2O = L-seryl-[protein] + phosphate. It catalyses the reaction O-phospho-L-threonyl-[protein] + H2O = L-threonyl-[protein] + phosphate. This is Putative protein phosphatase 2C 63 from Oryza sativa subsp. japonica (Rice).